The following is a 283-amino-acid chain: Protein FDD123 (283 aa).

Transmembrane regions (helical) follow at residues 24 to 44, 52 to 72, 97 to 117, 122 to 142, 148 to 168, 185 to 205, and 217 to 237; these read WLWA…AWTF, LFHQ…FSMA, YIQW…ATGL, IFTT…AALV, WGYY…LLWH, ILAA…WACA, and MIWY…FFLW.

Belongs to the archaeal/bacterial/fungal opsin family.

It is found in the membrane. In Trametes versicolor (White-rot fungus), this protein is Protein FDD123 (FDD123).